Here is a 772-residue protein sequence, read N- to C-terminus: Annulin (772 aa).

S-palmitoyl cysteine attachment occurs at residues Cys-4 and Cys-5. Residues 15 to 57 (NEGSGGGIPLMPVRGGSTRRPDSLPKPPAAVVPSPPSPGDVPD) form a disordered region. Positions 38-53 (LPKPPAAVVPSPPSPG) are enriched in pro residues. Residues His-400 and Asp-427 contribute to the active site. Asn-467, Asp-469, Glu-517, and Glu-522 together coordinate Ca(2+).

It belongs to the transglutaminase superfamily. Transglutaminase family. Ca(2+) is required as a cofactor. Has an annular, or ring-like expression pattern in epithelial annuli of developing limb segment boundary cells. In embryos, it is seen in gastrulating cells, in cells surrounding rapidly dividing neuroblasts, and in muscle pioneer cells invaginating to form apodemes.

The protein resides in the cell membrane. It catalyses the reaction L-glutaminyl-[protein] + L-lysyl-[protein] = [protein]-L-lysyl-N(6)-5-L-glutamyl-[protein] + NH4(+). Its function is as follows. Participates in morphogenetic activities of the cells, maybe by stabilizing the membrane or subcortical structures of cells that are under mechanical stress. Probably catalyzes the cross-linking of proteins and the conjugation of polyamines to proteins. The sequence is that of Annulin from Schistocerca americana (American grasshopper).